Consider the following 486-residue polypeptide: ATP-dependent rRNA helicase rrp3 (486 aa).

Positions 1–60 are disordered; it reads MSSVKRRKTDKNPSLEGLKSKKTKESKKESHTPSPEPIEDTEDNRVIEETEEAEEDDAPK. A Q motif motif is present at residues 60–88; it reads KSFKDLGIVDSLCEACDTLGYKAPTPIQR. Residues 91-262 enclose the Helicase ATP-binding domain; the sequence is IPLALQGRDL…RASLKDPLRV (172 aa). 104 to 111 is a binding site for ATP; sequence AETGSGKT. Positions 210–213 match the DEAD box motif; sequence DEAD. The Helicase C-terminal domain maps to 286–434; the sequence is HKDTYLIYLL…EYPTVKDEVM (149 aa). Composition is skewed to basic and acidic residues over residues 447–460 and 476–486; these read ARNE…DRGK and RGRDEMDREEG. Positions 447-486 are disordered; the sequence is ARNEMKNLHEDRGKKGAVLKGRRPANGAKRGRDEMDREEG.

This sequence belongs to the DEAD box helicase family. DDX47/RRP3 subfamily. As to quaternary structure, interacts with the SSU processome.

Its subcellular location is the nucleus. The enzyme catalyses ATP + H2O = ADP + phosphate + H(+). Functionally, ATP-dependent rRNA helicase required for pre-ribosomal RNA processing. Involved in the maturation of the 35S-pre-rRNA and to its cleavage to mature 18S rRNA. This chain is ATP-dependent rRNA helicase rrp3, found in Botryotinia fuckeliana (strain B05.10) (Noble rot fungus).